Here is a 249-residue protein sequence, read N- to C-terminus: MNKPFSASILTLYPEMFPGPLGHSLAGRALENNIWSLETVAIRDFANDRHHTVDDTPSGGGAGMVMRADILARALDHSCEKHPDLPVLAMTPRGYPLTQSRVRQLSEGAGAIIICGRFEGMDERLFEKRAIEPVSIGDYILSGGEMAALTLLDACIRLIPGVMGKITSGEDESFETGLLEYPQYTRPVEWEGLSIPEVLRSGNHAHIKAWRQAMAERDTRLRRPDLWERYRSVQASRPLARNKKDRNEK.

S-adenosyl-L-methionine contacts are provided by residues G116 and 136–141 (IGDYIL).

It belongs to the RNA methyltransferase TrmD family. As to quaternary structure, homodimer.

Its subcellular location is the cytoplasm. It catalyses the reaction guanosine(37) in tRNA + S-adenosyl-L-methionine = N(1)-methylguanosine(37) in tRNA + S-adenosyl-L-homocysteine + H(+). Functionally, specifically methylates guanosine-37 in various tRNAs. The protein is tRNA (guanine-N(1)-)-methyltransferase of Zymomonas mobilis subsp. mobilis (strain ATCC 31821 / ZM4 / CP4).